Here is a 295-residue protein sequence, read N- to C-terminus: MKSRFENALASAPESLSRHLAPIILAADFDASLSTVQFDELLKQTGMTDNQLRVALLPFAAAYSYAPISEFYVGAIVRGLSGTLYFGANMEFDGVQLGQTVHAEQSAISHAWMKGEQGLSDITINFSPCGHCRQFMNELSSAKELKIQLPEREEKKLHDYLPDSFGPSDLGIESALMSQVHHGFATEDDDALMQRAVEAMNRSHAPYTHNLSGVALQTESGRVYLGAYAENAAFNPSLPPLQVALIQLLLAGERFENIQSAALVESHKGKISHLACTQSTLEALNPDIPVSYLSL.

CMP/dCMP-type deaminase domains are found at residues 48 to 168 (TDNQ…FGPS) and 187 to 295 (EDDD…YLSL). Residue 89-91 (NME) coordinates substrate. His-102 contributes to the Zn(2+) binding site. Glu-104 functions as the Proton donor in the catalytic mechanism. Positions 129 and 132 each coordinate Zn(2+).

It belongs to the cytidine and deoxycytidylate deaminase family. In terms of assembly, homodimer. It depends on Zn(2+) as a cofactor.

The enzyme catalyses cytidine + H2O + H(+) = uridine + NH4(+). It carries out the reaction 2'-deoxycytidine + H2O + H(+) = 2'-deoxyuridine + NH4(+). In terms of biological role, this enzyme scavenges exogenous and endogenous cytidine and 2'-deoxycytidine for UMP synthesis. This is Cytidine deaminase from Vibrio vulnificus (strain YJ016).